Consider the following 184-residue polypeptide: Large ribosomal subunit protein uL5 (184 aa).

It belongs to the universal ribosomal protein uL5 family. In terms of assembly, part of the 50S ribosomal subunit; part of the 5S rRNA/L5/L18/L25 subcomplex. Contacts the 5S rRNA and the P site tRNA. Forms a bridge to the 30S subunit in the 70S ribosome.

In terms of biological role, this is one of the proteins that bind and probably mediate the attachment of the 5S RNA into the large ribosomal subunit, where it forms part of the central protuberance. In the 70S ribosome it contacts protein S13 of the 30S subunit (bridge B1b), connecting the 2 subunits; this bridge is implicated in subunit movement. Contacts the P site tRNA; the 5S rRNA and some of its associated proteins might help stabilize positioning of ribosome-bound tRNAs. This Thermotoga sp. (strain RQ2) protein is Large ribosomal subunit protein uL5.